We begin with the raw amino-acid sequence, 330 residues long: Phosphate acyltransferase (330 aa).

It belongs to the PlsX family. Homodimer. Probably interacts with PlsY.

The protein localises to the cytoplasm. It carries out the reaction a fatty acyl-[ACP] + phosphate = an acyl phosphate + holo-[ACP]. It participates in lipid metabolism; phospholipid metabolism. Its function is as follows. Catalyzes the reversible formation of acyl-phosphate (acyl-PO(4)) from acyl-[acyl-carrier-protein] (acyl-ACP). This enzyme utilizes acyl-ACP as fatty acyl donor, but not acyl-CoA. This chain is Phosphate acyltransferase, found in Bacillus licheniformis (strain ATCC 14580 / DSM 13 / JCM 2505 / CCUG 7422 / NBRC 12200 / NCIMB 9375 / NCTC 10341 / NRRL NRS-1264 / Gibson 46).